Here is a 173-residue protein sequence, read N- to C-terminus: NADH-ubiquinone oxidoreductase chain 6 (173 aa).

Helical transmembrane passes span 1–21 (MTYFMFFLGLCFVLGGLAVAS), 27–47 (YGVVGLVLASVAGCGWLLSLG), 48–68 (ISFVSLVLFMVYLGGMLVVFV), 87–107 (VIGYGAGFVGVLMVGMVIGGF), and 139–159 (CGVGMFLVAGWGLLLTLFVVL).

It belongs to the complex I subunit 6 family.

The protein resides in the mitochondrion membrane. It catalyses the reaction a ubiquinone + NADH + 5 H(+)(in) = a ubiquinol + NAD(+) + 4 H(+)(out). In terms of biological role, core subunit of the mitochondrial membrane respiratory chain NADH dehydrogenase (Complex I) that is believed to belong to the minimal assembly required for catalysis. Complex I functions in the transfer of electrons from NADH to the respiratory chain. The immediate electron acceptor for the enzyme is believed to be ubiquinone. The polypeptide is NADH-ubiquinone oxidoreductase chain 6 (MT-ND6) (Alca torda (Razorbill)).